The following is a 68-amino-acid chain: U19-ctenitoxin-Pn1a (68 aa).

Gln1 is modified (pyrrolidone carboxylic acid). 5 disulfides stabilise this stretch: Cys8/Cys19, Cys13/Cys28, Cys18/Cys51, Cys38/Cys59, and Cys53/Cys65.

Expressed by the venom gland.

It is found in the secreted. In terms of biological role, non-toxic to mice and insects. This chain is U19-ctenitoxin-Pn1a, found in Phoneutria nigriventer (Brazilian armed spider).